A 341-amino-acid chain; its full sequence is Phosphoribosylformylglycinamidine cyclo-ligase (341 aa).

This sequence belongs to the AIR synthase family.

It localises to the cytoplasm. The catalysed reaction is 2-formamido-N(1)-(5-O-phospho-beta-D-ribosyl)acetamidine + ATP = 5-amino-1-(5-phospho-beta-D-ribosyl)imidazole + ADP + phosphate + H(+). Its pathway is purine metabolism; IMP biosynthesis via de novo pathway; 5-amino-1-(5-phospho-D-ribosyl)imidazole from N(2)-formyl-N(1)-(5-phospho-D-ribosyl)glycinamide: step 2/2. This is Phosphoribosylformylglycinamidine cyclo-ligase from Alkaliphilus oremlandii (strain OhILAs) (Clostridium oremlandii (strain OhILAs)).